An 813-amino-acid chain; its full sequence is Probable E3 ubiquitin-protein ligase hulA (813 aa).

One can recognise a C2 domain in the interval 1 to 109 (MGSNLPAQPN…QMGGDEMLTR (109 aa)). 2 disordered regions span residues 131 to 235 (NLST…GWER) and 251 to 351 (RTTT…YFVD). Over residues 148-167 (VQSSTSSGLVPQVAPSSSHP) the composition is skewed to polar residues. A compositionally biased stretch (low complexity) spans 188 to 215 (RVPSTTRPSSTAAPASAAGAAVSNSHGS). The 34-residue stretch at 227-260 (GRLPAGWERREDNLGRTYYVDHNTRTTTWTRPSS) folds into the WW 1 domain. Polar residues predominate over residues 251 to 264 (RTTTWTRPSSNYNE). Over residues 265-292 (HAQRSQREANMQLERRAHQSRMLPEDRT) the composition is skewed to basic and acidic residues. Positions 293–307 (GANSPNLPESSQQAH) are enriched in polar residues. The span at 322–331 (ATGATTAGTG) shows a compositional bias: low complexity. 2 WW domains span residues 331–364 (GELP…DPRR) and 391–424 (GPLP…DPRL). The region spanning 480–813 (SASDLKKRLM…VEETLGFGQE (334 aa)) is the HECT domain. The active-site Glycyl thioester intermediate is the cysteine 781.

Belongs to the RSP5/NEDD4 family. As to quaternary structure, interacts with creD.

It is found in the cytoplasm. It carries out the reaction S-ubiquitinyl-[E2 ubiquitin-conjugating enzyme]-L-cysteine + [acceptor protein]-L-lysine = [E2 ubiquitin-conjugating enzyme]-L-cysteine + N(6)-ubiquitinyl-[acceptor protein]-L-lysine.. Its pathway is protein modification; protein ubiquitination. Its function is as follows. E3 ubiquitin-protein ligase which accepts ubiquitin from an E2 ubiquitin-conjugating enzyme in the form of a thioester and then directly transfers the ubiquitin to targeted substrates. Probably involved in the regulatory network controlling carbon source utilization. In Aspergillus fumigatus (strain CBS 144.89 / FGSC A1163 / CEA10) (Neosartorya fumigata), this protein is Probable E3 ubiquitin-protein ligase hulA (hulA).